The following is a 31-amino-acid chain: Photosystem II reaction center protein M (31 aa).

A helical transmembrane segment spans residues 5–25 (ILAFIATALLILVPTAFLLII).

It belongs to the PsbM family. As to quaternary structure, PSII is composed of 1 copy each of membrane proteins PsbA, PsbB, PsbC, PsbD, PsbE, PsbF, PsbH, PsbI, PsbJ, PsbK, PsbL, PsbM, PsbT, PsbX, PsbY, PsbZ, Psb30/Ycf12, at least 3 peripheral proteins of the oxygen-evolving complex and a large number of cofactors. It forms dimeric complexes.

The protein resides in the plastid membrane. Functionally, one of the components of the core complex of photosystem II (PSII). PSII is a light-driven water:plastoquinone oxidoreductase that uses light energy to abstract electrons from H(2)O, generating O(2) and a proton gradient subsequently used for ATP formation. It consists of a core antenna complex that captures photons, and an electron transfer chain that converts photonic excitation into a charge separation. This subunit is found at the monomer-monomer interface. The sequence is that of Photosystem II reaction center protein M from Cuscuta exaltata (Tall dodder).